The chain runs to 383 residues: UDP-N-acetylglucosamine--N-acetylmuramyl-(pentapeptide) pyrophosphoryl-undecaprenol N-acetylglucosamine transferase (383 aa).

Residues 11–13 (TGG), Asn125, Arg166, Ser191, Ile246, and Gln291 contribute to the UDP-N-acetyl-alpha-D-glucosamine site. The interval 364–383 (PNGRERTPIEAEKKAPRSNS) is disordered. Positions 366–383 (GRERTPIEAEKKAPRSNS) are enriched in basic and acidic residues.

The protein belongs to the glycosyltransferase 28 family. MurG subfamily.

The protein resides in the cell inner membrane. It catalyses the reaction di-trans,octa-cis-undecaprenyl diphospho-N-acetyl-alpha-D-muramoyl-L-alanyl-D-glutamyl-meso-2,6-diaminopimeloyl-D-alanyl-D-alanine + UDP-N-acetyl-alpha-D-glucosamine = di-trans,octa-cis-undecaprenyl diphospho-[N-acetyl-alpha-D-glucosaminyl-(1-&gt;4)]-N-acetyl-alpha-D-muramoyl-L-alanyl-D-glutamyl-meso-2,6-diaminopimeloyl-D-alanyl-D-alanine + UDP + H(+). Its pathway is cell wall biogenesis; peptidoglycan biosynthesis. Functionally, cell wall formation. Catalyzes the transfer of a GlcNAc subunit on undecaprenyl-pyrophosphoryl-MurNAc-pentapeptide (lipid intermediate I) to form undecaprenyl-pyrophosphoryl-MurNAc-(pentapeptide)GlcNAc (lipid intermediate II). The sequence is that of UDP-N-acetylglucosamine--N-acetylmuramyl-(pentapeptide) pyrophosphoryl-undecaprenol N-acetylglucosamine transferase from Myxococcus xanthus (strain DK1622).